The primary structure comprises 30 residues: Thaumatin-like protein (30 aa).

Belongs to the thaumatin family.

It localises to the secreted. In terms of biological role, has antifungal activity against C.comatus, F.oxysporum and P.ostreatus. This chain is Thaumatin-like protein, found in Phaseolus vulgaris (Kidney bean).